We begin with the raw amino-acid sequence, 263 residues long: Methylesterase 18 (263 aa).

Serine 80 functions as the Acyl-ester intermediate in the catalytic mechanism. Active-site charge relay system residues include aspartate 212 and histidine 240.

The protein belongs to the AB hydrolase superfamily. Methylesterase family.

It carries out the reaction methyl (indol-3-yl)acetate + H2O = (indol-3-yl)acetate + methanol + H(+). The protein operates within plant hormone biosynthesis. Functionally, methylesterase shown to have methyl indole-3-acetic acid (MeIAA) esterase activity in vitro. In Arabidopsis thaliana (Mouse-ear cress), this protein is Methylesterase 18.